The sequence spans 272 residues: MLTKRIIPCLDIKEGRVVKGTNFVELKDAGDPVELSKIYNEQGADELVFLDITASFEKRGIIIDVVKRTAEQVFIPLTVGGGIKTVDDFRKILRAGADKISINTSAVKTPKLIKEASEIFGTQCVVVAMDVKRNYITNPRDENLKDKNVFETKHGSCWFEVYIYGGREGTGIDAIEWAKKVEILGAGEILLTSMDADGTKDGYDLVLTRAISEKVKLPIIASGGCGNAKHVVDAFKDGKADAALMASILHYRECTVNDLKKEVEKNNIPVRF.

Active-site residues include Asp11 and Asp130.

This sequence belongs to the HisA/HisF family. In terms of assembly, heterodimer of HisH and HisF.

The protein localises to the cytoplasm. It carries out the reaction 5-[(5-phospho-1-deoxy-D-ribulos-1-ylimino)methylamino]-1-(5-phospho-beta-D-ribosyl)imidazole-4-carboxamide + L-glutamine = D-erythro-1-(imidazol-4-yl)glycerol 3-phosphate + 5-amino-1-(5-phospho-beta-D-ribosyl)imidazole-4-carboxamide + L-glutamate + H(+). The protein operates within amino-acid biosynthesis; L-histidine biosynthesis; L-histidine from 5-phospho-alpha-D-ribose 1-diphosphate: step 5/9. In terms of biological role, IGPS catalyzes the conversion of PRFAR and glutamine to IGP, AICAR and glutamate. The HisF subunit catalyzes the cyclization activity that produces IGP and AICAR from PRFAR using the ammonia provided by the HisH subunit. This chain is Imidazole glycerol phosphate synthase subunit HisF, found in Methanococcus maripaludis (strain C6 / ATCC BAA-1332).